A 396-amino-acid polypeptide reads, in one-letter code: Probable tRNA sulfurtransferase (396 aa).

The THUMP domain maps to 58 to 169; the sequence is NQFIEKLKMV…KKNIYVFTRS (112 aa). Residues 187-188, 212-213, R269, G291, and Q300 each bind ATP; these read LL and YF.

It belongs to the ThiI family.

Its subcellular location is the cytoplasm. It carries out the reaction [ThiI sulfur-carrier protein]-S-sulfanyl-L-cysteine + a uridine in tRNA + 2 reduced [2Fe-2S]-[ferredoxin] + ATP + H(+) = [ThiI sulfur-carrier protein]-L-cysteine + a 4-thiouridine in tRNA + 2 oxidized [2Fe-2S]-[ferredoxin] + AMP + diphosphate. It catalyses the reaction [ThiS sulfur-carrier protein]-C-terminal Gly-Gly-AMP + S-sulfanyl-L-cysteinyl-[cysteine desulfurase] + AH2 = [ThiS sulfur-carrier protein]-C-terminal-Gly-aminoethanethioate + L-cysteinyl-[cysteine desulfurase] + A + AMP + 2 H(+). It functions in the pathway cofactor biosynthesis; thiamine diphosphate biosynthesis. In terms of biological role, catalyzes the ATP-dependent transfer of a sulfur to tRNA to produce 4-thiouridine in position 8 of tRNAs, which functions as a near-UV photosensor. Also catalyzes the transfer of sulfur to the sulfur carrier protein ThiS, forming ThiS-thiocarboxylate. This is a step in the synthesis of thiazole, in the thiamine biosynthesis pathway. The sulfur is donated as persulfide by IscS. This chain is Probable tRNA sulfurtransferase, found in Halothermothrix orenii (strain H 168 / OCM 544 / DSM 9562).